The following is a 261-amino-acid chain: 3-methyl-2-oxobutanoate hydroxymethyltransferase (261 aa).

Residues D44 and D83 each coordinate Mg(2+). 3-methyl-2-oxobutanoate-binding positions include 44–45 (DS), D83, and K112. Residue E114 participates in Mg(2+) binding. E181 acts as the Proton acceptor in catalysis.

It belongs to the PanB family. In terms of assembly, homodecamer; pentamer of dimers. Mg(2+) is required as a cofactor.

It is found in the cytoplasm. The enzyme catalyses 3-methyl-2-oxobutanoate + (6R)-5,10-methylene-5,6,7,8-tetrahydrofolate + H2O = 2-dehydropantoate + (6S)-5,6,7,8-tetrahydrofolate. It functions in the pathway cofactor biosynthesis; (R)-pantothenate biosynthesis; (R)-pantoate from 3-methyl-2-oxobutanoate: step 1/2. In terms of biological role, catalyzes the reversible reaction in which hydroxymethyl group from 5,10-methylenetetrahydrofolate is transferred onto alpha-ketoisovalerate to form ketopantoate. This Acidithiobacillus ferrooxidans (strain ATCC 23270 / DSM 14882 / CIP 104768 / NCIMB 8455) (Ferrobacillus ferrooxidans (strain ATCC 23270)) protein is 3-methyl-2-oxobutanoate hydroxymethyltransferase.